The following is a 128-amino-acid chain: Mu-like prophage FluMu protein gp35 (128 aa).

A disordered region spans residues 53–87 (TETGSQEGGEGLSKEPAGSDEQKQLRADPPSTDLN).

The protein to phage Mu protein gp35. In terms of assembly, monomer.

This is Mu-like prophage FluMu protein gp35 from Haemophilus influenzae (strain ATCC 51907 / DSM 11121 / KW20 / Rd).